The following is a 606-amino-acid chain: MVSDLKFAPSFQSFVDSSFFHELSRLKLDIFKLDSDEKALYTQLDLNQFTSNVLAISLRDDSFQKPDNDEHNIILKGYLLNFNTIELFKNCNKIQFIKEKGQELLQRGLENDLNEIISFYMISFADLKKYKFYYWICMPSFQSDGATYQIISSKVIASDSDISVSFIKQNVIIACVISGVIQKATPDNLKVCEKVVFKDFSHLKDIPSAVTKNILTVWSKLSPRETYTICFLRSDESSFEAEIIINNGNNPSLKVSGWEKNGLGKLAPKSIDLSSLMDPVKIADQAVDLNLKLMKWRIAPKIDLDGIRNTKALLLGSGTLGCYVSRVLLAWGVRHISFVDNSTVSFSNPVRQSLYNFEDCGKPKAQIASEALKRIFPSVESSGYQLEIPMIGHPVTNEKKQRQDYEALEDLIKSHDVIFLLMDARETRWLPSVLGRLHNKIVINAALGFDSYLVMRHGNDDDKLGCYFCNDILAPSDSLTDRTLDQMCTVTRPGVALLAASQAVELLVTYLQPTPNVLGTSPHQIRGFLNEFKTVSQSTPEYEHCCAGNKSVISALQENGWNFVRQALDDYKCVEKLSGLSKVQEEAELALEEDFDFSEDDEFVTG.

The GXGXXG motif motif lies at 316 to 321 (GSGTLG). The active-site Glycyl thioester intermediate is cysteine 488. The segment at 567-606 (ALDDYKCVEKLSGLSKVQEEAELALEEDFDFSEDDEFVTG) is homodimerization.

This sequence belongs to the ATG7 family. In terms of assembly, homodimer. Interacts with ATG8 through a thioester bond between Cys-488 and the C-terminal Gly of ATG8 and with ATG12 through a thioester bond between Cys-488 and the C-terminal Gly of ATG12. Also interacts with ATG3.

It localises to the cytoplasm. Its subcellular location is the preautophagosomal structure. In terms of biological role, E1-like activating enzyme involved in the 2 ubiquitin-like systems required for cytoplasm to vacuole transport (Cvt) and autophagy. Activates ATG12 for its conjugation with ATG5 and ATG8 for its conjugation with phosphatidylethanolamine. Both systems are needed for the ATG8 association to Cvt vesicles and autophagosomes membranes. Autophagy is essential for maintenance of amino acid levels and protein synthesis under nitrogen starvation. Required for selective autophagic degradation of the nucleus (nucleophagy) as well as for mitophagy which contributes to regulate mitochondrial quantity and quality by eliminating the mitochondria to a basal level to fulfill cellular energy requirements and preventing excess ROS production. The polypeptide is Ubiquitin-like modifier-activating enzyme ATG7 (Kluyveromyces marxianus (strain DMKU3-1042 / BCC 29191 / NBRC 104275) (Yeast)).